Reading from the N-terminus, the 103-residue chain is Small ribosomal subunit protein uS10 (103 aa).

Belongs to the universal ribosomal protein uS10 family. In terms of assembly, part of the 30S ribosomal subunit.

Involved in the binding of tRNA to the ribosomes. The polypeptide is Small ribosomal subunit protein uS10 (Neisseria meningitidis serogroup C / serotype 2a (strain ATCC 700532 / DSM 15464 / FAM18)).